Here is a 36-residue protein sequence, read N- to C-terminus: Photosystem I reaction center subunit VIII (36 aa).

Residues 9–29 (ILTPVVTLVFPGLMFALFFVL) traverse the membrane as a helical segment.

It belongs to the PsaI family.

It is found in the plastid. It localises to the chloroplast thylakoid membrane. In terms of biological role, may help in the organization of the PsaL subunit. The protein is Photosystem I reaction center subunit VIII of Emiliania huxleyi (Coccolithophore).